The sequence spans 560 residues: MKVWMAILISILCWQSSVWAVCPAWSPARAQEEISRLQQQIKQWDDVYWKEGKSEVEDGVYDQLSARLTQWQRCFGSEPRDVMMPPLNGAVMHPVAHTGVRKMVDKNALSLWMRERSDLWVQPKVDGVAVTLVYRDGKLNKAISRGNGLKGEDWTQKVSLISAVPQTVSGPLANSTLQGEIFLQREGHIQQQMGGINARAKVAGLMMRQDDSDTLNSLGVFVWAWPDGPQLMSDRLKELATAGFTLTQTYTRAVKNADEVARVRNEWWKAELPFVTDGVVVRAAKEPESRHWLPGQAEWLVAWKYQPVAQVAEVKAIQFAVGKSGKISVVASLAPVMLDDKKVQRVNIGSVRRWQEWDIAPGDQILVSLAGQGIPRIDDVVWRGAERTKPTPPENRFNSLTCYFASDVCQEQFISRLVWLGAKQVLGLDGIGEAGWRALHQTHRFEHIFSWLLLTPEQLQNTPGIAKSKSAQLWHQFNLARKQPFTRWVMAMGIPLTRAALNASDERSWSQLLFSTEQFWQQLPGTGSGRARQVIEWKENAQIKKLGSWLAAQQITGFEP.

The N6-AMP-lysine intermediate role is filled by K124.

This sequence belongs to the NAD-dependent DNA ligase family. LigB subfamily.

It carries out the reaction NAD(+) + (deoxyribonucleotide)n-3'-hydroxyl + 5'-phospho-(deoxyribonucleotide)m = (deoxyribonucleotide)n+m + AMP + beta-nicotinamide D-nucleotide.. Functionally, catalyzes the formation of phosphodiester linkages between 5'-phosphoryl and 3'-hydroxyl groups in double-stranded DNA using NAD as a coenzyme and as the energy source for the reaction. This Escherichia coli O9:H4 (strain HS) protein is DNA ligase B.